The primary structure comprises 311 residues: Aldose reductase B (311 aa).

13–23 contributes to the NADP(+) binding site; that stretch reads DIHHIPMIGLG. The Proton donor role is filled by Tyr54. His116 lines the substrate pocket. 219–273 is a binding site for NADP(+); it reads SPLGQGKCDLLSNETLKSIADKHNKTVANVIFKWLNQRGIVTIPKSSNPARIIEN.

This sequence belongs to the aldo/keto reductase family.

It carries out the reaction an alditol + NAD(+) = an aldose + NADH + H(+). The catalysed reaction is an alditol + NADP(+) = an aldose + NADPH + H(+). Its function is as follows. Catalyzes the NADPH-dependent reduction of a wide variety of carbonyl-containing compounds to their corresponding alcohols with a broad range of catalytic efficiencies. The polypeptide is Aldose reductase B (alrB) (Dictyostelium discoideum (Social amoeba)).